Here is a 468-residue protein sequence, read N- to C-terminus: Spliceosome-associated protein CWC27 homolog (468 aa).

Serine 2 is modified (N-acetylserine). The PPIase cyclophilin-type domain maps to 11–166 (TNGKVLLKTT…NPHRIKSCEV (156 aa)). Disordered stretches follow at residues 204–382 (LLSF…EDQT) and 427–468 (RKVK…KERR). Residues 206-229 (SFGEEAEEEEEEVNRVSQSMKGRS) adopt a coiled-coil conformation. The segment covering 231–241 (SSHDLLKDDPH) has biased composition (basic and acidic residues). The segment covering 256 to 268 (TGDLEDDAEDDSV) has biased composition (acidic residues). 2 stretches are compositionally biased toward basic and acidic residues: residues 269-287 (EHDG…ERIA) and 302-342 (GDGE…AEKG). At serine 273 the chain carries Phosphoserine. Residues 309 to 342 (ASRSEELRKEARQLKRELLAAKQKKESATKAEKG) are a coiled coil. Serine 343 carries the post-translational modification Phosphoserine. Composition is skewed to basic and acidic residues over residues 356 to 368 (EYRR…EALR) and 453 to 468 (RREE…KERR).

Belongs to the cyclophilin-type PPIase family. As to quaternary structure, part of the activated spliceosome B/catalytic step 1 spliceosome, one of the forms of the spliceosome which has a well-formed active site but still cannot catalyze the branching reaction and is composed at least of 52 proteins, the U2, U5 and U6 snRNAs and the pre-mRNA. Recruited during early steps of activated spliceosome B maturation, it is probably one of the first proteins released from this complex as he matures to the spliceosome C complex. Component of the minor spliceosome, which splices U12-type introns.

The protein resides in the nucleus. In terms of biological role, as part of the spliceosome, plays a role in pre-mRNA splicing. Probable inactive PPIase with no peptidyl-prolyl cis-trans isomerase activity. As a component of the minor spliceosome, involved in the splicing of U12-type introns in pre-mRNAs. The protein is Spliceosome-associated protein CWC27 homolog of Rattus norvegicus (Rat).